The following is a 557-amino-acid chain: Probable protein kinase UbiB (557 aa).

The 389-residue stretch at 121-509 folds into the Protein kinase domain; it reads AFDTTPLASA…RKLQTRVVTA (389 aa). ATP-binding positions include 127–135 and K154; that span reads LASASIAQV. The active-site Proton acceptor is D289. The next 2 membrane-spanning stretches (helical) occupy residues 506-526 and 535-555; these read VVTA…YGLH and VPVW…IAWL.

Belongs to the ABC1 family. UbiB subfamily.

It localises to the cell inner membrane. Its pathway is cofactor biosynthesis; ubiquinone biosynthesis [regulation]. Its function is as follows. Is probably a protein kinase regulator of UbiI activity which is involved in aerobic coenzyme Q (ubiquinone) biosynthesis. The polypeptide is Probable protein kinase UbiB (Xanthomonas campestris pv. campestris (strain B100)).